A 219-amino-acid polypeptide reads, in one-letter code: EP300-interacting inhibitor of differentiation 2 (219 aa).

Positions 1-71 (MSELPADQGV…PVPEAREGPM (71 aa)) are disordered. Residues 20-34 (GDVRQAEVGGRRREP) show a composition bias toward basic and acidic residues. The residue at position 75 (Arg-75) is an Omega-N-methylarginine. A disordered region spans residues 95–115 (AEPAEEEGPEGRPRSRPGNGP).

As to quaternary structure, heterodimer with EID2B. Interacts with the C-terminus of EP300. Interacts with HDAC1 and HDAC2. Interacts with SMAD2, SMAD4 and with the MH2 domain of SMAD3.

It is found in the nucleus. Its function is as follows. Interacts with EP300 and acts as a repressor of MYOD-dependent transcription and muscle differentiation. Inhibits EP300 histone acetyltransferase activity. Acts as a repressor of TGFB/SMAD transcriptional responses. May act as a repressor of the TGFB/SMAD3-dependent signaling by selectively blocking formation of TGFB-induced SMAD3-SMAD4 complex. The protein is EP300-interacting inhibitor of differentiation 2 of Bos taurus (Bovine).